The chain runs to 208 residues: MQILLAALVAYLIGSVSFAVVVSSVMGLADPRSYGSKNPGATNVLRSGNKKAAILTLVGDAFKGWIAVWLARHFGLPDVAIAWVAIAVFLGHLYPVFFRFQGGKGVATAAGVLLAVHPVLGLATALTWLIVAFFFRYSSLAALVAAVFAPVFDVFLFGMPGHNPVAWAVLAMSVLLVWRHRGNISKLLAGQESRIGDKKKAAADGGKA.

5 consecutive transmembrane segments (helical) span residues 3-23 (ILLA…VVVS), 51-71 (KAAI…VWLA), 78-98 (DVAI…PVFF), 115-135 (AVHP…AFFF), and 140-160 (LAAL…FGMP).

Belongs to the PlsY family. In terms of assembly, probably interacts with PlsX.

Its subcellular location is the cell inner membrane. It carries out the reaction an acyl phosphate + sn-glycerol 3-phosphate = a 1-acyl-sn-glycero-3-phosphate + phosphate. Its pathway is lipid metabolism; phospholipid metabolism. Its function is as follows. Catalyzes the transfer of an acyl group from acyl-phosphate (acyl-PO(4)) to glycerol-3-phosphate (G3P) to form lysophosphatidic acid (LPA). This enzyme utilizes acyl-phosphate as fatty acyl donor, but not acyl-CoA or acyl-ACP. In Burkholderia orbicola (strain MC0-3), this protein is Glycerol-3-phosphate acyltransferase.